A 177-amino-acid chain; its full sequence is Translation initiation factor IF-3 (177 aa).

Belongs to the IF-3 family. In terms of assembly, monomer.

The protein resides in the cytoplasm. IF-3 binds to the 30S ribosomal subunit and shifts the equilibrium between 70S ribosomes and their 50S and 30S subunits in favor of the free subunits, thus enhancing the availability of 30S subunits on which protein synthesis initiation begins. This Nostoc sp. (strain PCC 7120 / SAG 25.82 / UTEX 2576) protein is Translation initiation factor IF-3.